The following is a 581-amino-acid chain: Serine/threonine protein phosphatase 2A 55 kDa regulatory subunit B alpha isoform (581 aa).

The tract at residues 1-27 is disordered; the sequence is MMNPDGGDGDRLEAAGAGSSSAQQGHP. A compositionally biased stretch (low complexity) spans 14–25; it reads AAGAGSSSAQQG. WD repeat units follow at residues 47–86 and 123–164; these read QEVD…DNAS and EIEE…VKQV. The segment covering 172-189 has biased composition (low complexity); it reads RSVGTGTSSSASTSSSRG. A disordered region spans residues 172-192; sequence RSVGTGTSSSASTSSSRGLLP. WD repeat units follow at residues 241–279, 290–330, 349–387, and 492–530; these read AHDY…QSFN, DLTE…LCDN, EIIA…GPVS, and DFST…RKFI.

The protein belongs to the phosphatase 2A regulatory subunit B family. PP2A consists of a common heteromeric enzyme, composed of a catalytic subunit (subunits C), a constant regulatory subunit (subunit A), and a variety of regulatory subunits such as subunits B (the R2/B/PR55/B55, R3/B''/PR72/PR130/PR59 and R5/B'/B56 families).

In terms of biological role, the B regulatory subunit may modulate substrate selectivity and catalytic activity, and may also direct the localization of the catalytic enzyme to a particular subcellular compartment. The polypeptide is Serine/threonine protein phosphatase 2A 55 kDa regulatory subunit B alpha isoform (Oryza sativa subsp. japonica (Rice)).